Reading from the N-terminus, the 47-residue chain is Protein PsbN (47 aa).

The chain crosses the membrane as a helical span at residues 9–31 (YSLLIAMVTITFGLTGYGLYTAF).

The protein belongs to the PsbN family.

It localises to the cellular thylakoid membrane. Functionally, may play a role in photosystem I and II biogenesis. The polypeptide is Protein PsbN (Prochlorococcus marinus (strain MIT 9303)).